Reading from the N-terminus, the 141-residue chain is Large ribosomal subunit protein uL14 (141 aa).

It belongs to the universal ribosomal protein uL14 family. As to quaternary structure, part of the 50S ribosomal subunit. Forms a cluster with proteins L3 and L24e, part of which may contact the 16S rRNA in 2 intersubunit bridges.

Binds to 23S rRNA. Forms part of two intersubunit bridges in the 70S ribosome. In Pyrococcus furiosus (strain ATCC 43587 / DSM 3638 / JCM 8422 / Vc1), this protein is Large ribosomal subunit protein uL14.